The following is a 267-amino-acid chain: MVKISFQPAVAGIKGDKADKASASAPAPASATEILLTPAREEQPPQHRSKRGGSVGGVCYLSMGMVVLLMGLVFASVYIYRYFFLAQLARDNFFRCGVLYEDSLSSQVRTQMELEEDVKIYLDENYERINVPVPQFGGGDPADIIHDFQRGLTAYHDISLDKCYVIELNTTIVLPPRNFWELLMNVKRGTYLPQTYIIQEEMVVTEHVSDKEALGSFIYHLCNGKDTYRLRRRATRRRINKRGAKNCNAIRHFENTFVVETLICGVV.

Thr37 bears the Phosphothreonine mark. A helical; Signal-anchor for type II membrane protein membrane pass occupies residues Val55–Ala75. The BRICHOS domain occupies Phe136–Leu230. Residues Cys163 and Cys222 are joined by a disulfide bond. The N-linked (GlcNAc...) asparagine glycan is linked to Asn169.

It belongs to the ITM2 family. In terms of assembly, interacts with BACE1. Interacts with APP. Interacts with STMN2. In terms of processing, type I membrane-bound, as well as soluble, furin has a pre-eminent role in ITM2C proteolytic processing. PCSK7 and PCSK5 may also be involved although to a lesser extent. The soluble form of PCSK7 is incapable of processing ITM2C. Fails to undergo shedding by ADAM10 and intramembrane cleavage by SPPL2B. As to expression, high levels in the brain, specifically in the cerebral cortex, medulla, amygdala, hippocampus, thalamus, caudate nucleus, cerebellum, olfactory lobe and spinal cord. Very low levels in other organs.

Its subcellular location is the lysosome membrane. It localises to the cell membrane. In terms of biological role, negative regulator of amyloid-beta peptide production. May inhibit the processing of APP by blocking its access to alpha- and beta-secretase. Binding to the beta-secretase-cleaved APP C-terminal fragment is negligible, suggesting that ITM2C is a poor gamma-secretase cleavage inhibitor. May play a role in TNF-induced cell death and neuronal differentiation. The protein is Integral membrane protein 2C (ITM2C) of Homo sapiens (Human).